Reading from the N-terminus, the 531-residue chain is Peroxinectin A (531 aa).

Residues 1–21 form the signal peptide; that stretch reads MRLNLISFFIIFTILVSISNS. The N-linked (GlcNAc...) asparagine glycan is linked to Asn-62. Residue His-101 is the Proton acceptor of the active site. Asn-131 and Asn-338 each carry an N-linked (GlcNAc...) asparagine glycan.

Belongs to the peroxidase family.

It is found in the secreted. It catalyses the reaction 2 a phenolic donor + H2O2 = 2 a phenolic radical donor + 2 H2O. This is Peroxinectin A (poxA) from Dictyostelium discoideum (Social amoeba).